The sequence spans 445 residues: Argininosuccinate synthase (445 aa).

ATP-binding positions include 17-25 (AFSGGLDTS) and Ala-43. Position 99 (Tyr-99) interacts with L-citrulline. Positions 129 and 131 each coordinate ATP. Positions 131, 135, and 136 each coordinate L-aspartate. L-citrulline is bound at residue Asn-135. Residue Asp-136 participates in ATP binding. Positions 139 and 192 each coordinate L-citrulline. Asp-194 contributes to the ATP binding site. Residues Thr-201, Glu-203, and Glu-280 each coordinate L-citrulline.

The protein belongs to the argininosuccinate synthase family. Type 2 subfamily. In terms of assembly, homotetramer.

Its subcellular location is the cytoplasm. It carries out the reaction L-citrulline + L-aspartate + ATP = 2-(N(omega)-L-arginino)succinate + AMP + diphosphate + H(+). Its pathway is amino-acid biosynthesis; L-arginine biosynthesis; L-arginine from L-ornithine and carbamoyl phosphate: step 2/3. The protein is Argininosuccinate synthase of Acidobacterium capsulatum (strain ATCC 51196 / DSM 11244 / BCRC 80197 / JCM 7670 / NBRC 15755 / NCIMB 13165 / 161).